A 142-amino-acid polypeptide reads, in one-letter code: Large ribosomal subunit protein uL11 (142 aa).

This sequence belongs to the universal ribosomal protein uL11 family. Part of the ribosomal stalk of the 50S ribosomal subunit. Interacts with L10 and the large rRNA to form the base of the stalk. L10 forms an elongated spine to which L12 dimers bind in a sequential fashion forming a multimeric L10(L12)X complex. One or more lysine residues are methylated.

In terms of biological role, forms part of the ribosomal stalk which helps the ribosome interact with GTP-bound translation factors. The protein is Large ribosomal subunit protein uL11 of Serratia marcescens.